The sequence spans 210 residues: Chloramphenicol acetyltransferase (210 aa).

Residue His-79 is part of the active site.

It belongs to the transferase hexapeptide repeat family.

The enzyme catalyses chloramphenicol + acetyl-CoA = chloramphenicol 3-acetate + CoA. This enzyme is an effector of chloramphenicol resistance in bacteria. This is Chloramphenicol acetyltransferase (catB4) from Klebsiella aerogenes (Enterobacter aerogenes).